The chain runs to 88 residues: Small ribosomal subunit protein uS15c (88 aa).

The protein belongs to the universal ribosomal protein uS15 family. As to quaternary structure, part of the 30S ribosomal subunit.

It localises to the plastid. The protein localises to the chloroplast. In Nasturtium officinale (Watercress), this protein is Small ribosomal subunit protein uS15c (rps15).